A 412-amino-acid chain; its full sequence is Serine hydroxymethyltransferase (412 aa).

Residues L117 and 121–123 each bind (6S)-5,6,7,8-tetrahydrofolate; that span reads GHL. K226 is subject to N6-(pyridoxal phosphate)lysine.

Belongs to the SHMT family. Homodimer. Requires pyridoxal 5'-phosphate as cofactor.

It localises to the cytoplasm. It carries out the reaction (6R)-5,10-methylene-5,6,7,8-tetrahydrofolate + glycine + H2O = (6S)-5,6,7,8-tetrahydrofolate + L-serine. Its pathway is one-carbon metabolism; tetrahydrofolate interconversion. It functions in the pathway amino-acid biosynthesis; glycine biosynthesis; glycine from L-serine: step 1/1. In terms of biological role, catalyzes the reversible interconversion of serine and glycine with tetrahydrofolate (THF) serving as the one-carbon carrier. This reaction serves as the major source of one-carbon groups required for the biosynthesis of purines, thymidylate, methionine, and other important biomolecules. Also exhibits THF-independent aldolase activity toward beta-hydroxyamino acids, producing glycine and aldehydes, via a retro-aldol mechanism. In Staphylococcus aureus (strain USA300), this protein is Serine hydroxymethyltransferase.